Here is a 595-residue protein sequence, read N- to C-terminus: Aspartate--tRNA(Asp/Asn) ligase (595 aa).

E175 serves as a coordination point for L-aspartate. Positions 199–202 (QQYK) are aspartate. Residues R221 and H454 each contribute to the L-aspartate site. ATP is bound at residue 221 to 223 (RDE). E488 contributes to the ATP binding site. An L-aspartate-binding site is contributed by R495. An ATP-binding site is contributed by 540–543 (GIDR).

This sequence belongs to the class-II aminoacyl-tRNA synthetase family. Type 1 subfamily. Homodimer.

It is found in the cytoplasm. The catalysed reaction is tRNA(Asx) + L-aspartate + ATP = L-aspartyl-tRNA(Asx) + AMP + diphosphate. In terms of biological role, aspartyl-tRNA synthetase with relaxed tRNA specificity since it is able to aspartylate not only its cognate tRNA(Asp) but also tRNA(Asn). Reaction proceeds in two steps: L-aspartate is first activated by ATP to form Asp-AMP and then transferred to the acceptor end of tRNA(Asp/Asn). The protein is Aspartate--tRNA(Asp/Asn) ligase of Brucella anthropi (strain ATCC 49188 / DSM 6882 / CCUG 24695 / JCM 21032 / LMG 3331 / NBRC 15819 / NCTC 12168 / Alc 37) (Ochrobactrum anthropi).